A 143-amino-acid polypeptide reads, in one-letter code: Transcriptional regulator MraZ (143 aa).

2 consecutive SpoVT-AbrB domains span residues 5-47 and 76-119; these read EYDH…TLDE and AVEV…DRET.

It belongs to the MraZ family. In terms of assembly, forms oligomers.

The protein localises to the cytoplasm. It is found in the nucleoid. In Staphylococcus aureus (strain Mu3 / ATCC 700698), this protein is Transcriptional regulator MraZ.